The sequence spans 110 residues: uncharacterized protein (110 aa).

Disordered stretches follow at residues 1-42 (MEWG…RAQQ) and 66-110 (RQLG…AAEP). Residues 36 to 68 (REERAQQLLDAVEQRQRQLLDTIAACEEMLRQL) adopt a coiled-coil conformation.

This is an uncharacterized protein from Homo sapiens (Human).